The chain runs to 428 residues: Histidinol dehydrogenase (428 aa).

The NAD(+) site is built by tyrosine 125, glutamine 187, and asparagine 210. Residues serine 234, glutamine 256, and histidine 259 each coordinate substrate. Residues glutamine 256 and histidine 259 each coordinate Zn(2+). Catalysis depends on proton acceptor residues glutamate 323 and histidine 324. Substrate contacts are provided by histidine 324, aspartate 357, glutamate 411, and histidine 416. Residue aspartate 357 participates in Zn(2+) binding. Residue histidine 416 coordinates Zn(2+).

This sequence belongs to the histidinol dehydrogenase family. Zn(2+) is required as a cofactor.

It catalyses the reaction L-histidinol + 2 NAD(+) + H2O = L-histidine + 2 NADH + 3 H(+). It functions in the pathway amino-acid biosynthesis; L-histidine biosynthesis; L-histidine from 5-phospho-alpha-D-ribose 1-diphosphate: step 9/9. Its function is as follows. Catalyzes the sequential NAD-dependent oxidations of L-histidinol to L-histidinaldehyde and then to L-histidine. The chain is Histidinol dehydrogenase from Bacteroides thetaiotaomicron (strain ATCC 29148 / DSM 2079 / JCM 5827 / CCUG 10774 / NCTC 10582 / VPI-5482 / E50).